Reading from the N-terminus, the 159-residue chain is Phosphopantetheine adenylyltransferase (159 aa).

His-16 lines the ATP pocket. Residues Lys-40, Met-72, and Arg-86 each coordinate substrate. Residues 87–89 (GLR), Glu-97, and 122–128 (YQYLSAS) contribute to the ATP site.

It belongs to the bacterial CoaD family. Homohexamer. The cofactor is Mg(2+).

The protein localises to the cytoplasm. It carries out the reaction (R)-4'-phosphopantetheine + ATP + H(+) = 3'-dephospho-CoA + diphosphate. It functions in the pathway cofactor biosynthesis; coenzyme A biosynthesis; CoA from (R)-pantothenate: step 4/5. Its function is as follows. Reversibly transfers an adenylyl group from ATP to 4'-phosphopantetheine, yielding dephospho-CoA (dPCoA) and pyrophosphate. This Dehalococcoides mccartyi (strain ATCC BAA-2266 / KCTC 15142 / 195) (Dehalococcoides ethenogenes (strain 195)) protein is Phosphopantetheine adenylyltransferase.